A 331-amino-acid polypeptide reads, in one-letter code: Nucleotide sugar transporter SLC35B4 (331 aa).

11 helical membrane-spanning segments follow: residues 4–24 (ALAV…LELL), 30–50 (GCGN…GFLF), 59–79 (PAIP…VSVV), 92–112 (LHMI…IIIL), 117–137 (SIFK…CTFM), 153–173 (GFQA…ALLM), 201–221 (ALPL…AVLF), 229–249 (IPVI…NIIT), 251–267 (YVCI…CASL), 268–288 (TVTL…ILYF), and 291–311 (PFTL…LMYT). Residues 326–331 (KDSKKN) carry the Mediates endoplasmic reticulum retention motif.

The protein belongs to the nucleotide-sugar transporter family. SLC35B subfamily.

It is found in the endoplasmic reticulum membrane. The catalysed reaction is UDP-N-acetyl-alpha-D-glucosamine(in) + UDP-alpha-D-glucuronate(out) = UDP-N-acetyl-alpha-D-glucosamine(out) + UDP-alpha-D-glucuronate(in). It carries out the reaction UDP-alpha-D-xylose(in) + UDP-alpha-D-glucuronate(out) = UDP-alpha-D-xylose(out) + UDP-alpha-D-glucuronate(in). Its function is as follows. Antiporter that transports nucleotide sugars across the endoplasmic reticulum (ER) membrane in exchange for another nucleotide sugar. May couple UDP-alpha-D-glucuronate (UDP-GlcA) or UDP-alpha-D-xylose (UDP-Xyl) efflux to UDP-alpha-D-glucuronate (UDP-GlcA) influx into the ER lumen, which in turn stimulates glucuronidation and excretion of endobiotics and xenobiotics. The sequence is that of Nucleotide sugar transporter SLC35B4 (SLC35B4) from Pongo abelii (Sumatran orangutan).